Reading from the N-terminus, the 235-residue chain is UPF0758 protein A1S_2918 (235 aa).

The segment at 1 to 20 is disordered; sequence MNTSIKNWPEQERPRERLLQ. Over residues 9–18 the composition is skewed to basic and acidic residues; it reads PEQERPRERL. An MPN domain is found at 105–227; it reads SLHSSHLVLD…SFSFAEQQLL (123 aa). Zn(2+)-binding residues include histidine 176, histidine 178, and aspartate 189. Positions 176 to 189 match the JAMM motif motif; the sequence is HNHPFGSPQPSPED.

It belongs to the UPF0758 family.

The sequence is that of UPF0758 protein A1S_2918 from Acinetobacter baumannii (strain ATCC 17978 / DSM 105126 / CIP 53.77 / LMG 1025 / NCDC KC755 / 5377).